We begin with the raw amino-acid sequence, 797 residues long: Probable exo-1,4-beta-xylosidase bxlB (797 aa).

A signal peptide spans 1 to 21 (MPLICIVYFLQYLDKIAISYA). Residues Asn-86 and Asn-126 are each glycosylated (N-linked (GlcNAc...) asparagine). The active site involves Asp-312. N-linked (GlcNAc...) asparagine glycosylation is found at Asn-364, Asn-431, Asn-442, Asn-483, Asn-644, and Asn-787.

This sequence belongs to the glycosyl hydrolase 3 family.

The protein localises to the secreted. The catalysed reaction is Hydrolysis of (1-&gt;4)-beta-D-xylans, to remove successive D-xylose residues from the non-reducing termini.. It participates in glycan degradation; xylan degradation. In terms of biological role, xylan 1,4-beta-xylosidase involved in the hydrolysis of xylan, a major structural heterogeneous polysaccharide found in plant biomass representing the second most abundant polysaccharide in the biosphere, after cellulose. The protein is Probable exo-1,4-beta-xylosidase bxlB (bxlB) of Aspergillus oryzae (strain ATCC 42149 / RIB 40) (Yellow koji mold).